The chain runs to 219 residues: Histone H1.4 (219 aa).

A compositionally biased stretch (low complexity) spans M1–A15. Positions M1–S41 are disordered. S2 carries the N-acetylserine modification. The residue at position 2 (S2) is a Phosphoserine. N6-acetyllysine is present on K17. Position 18 is a phosphothreonine (T18). The segment covering V20–A35 has biased composition (basic residues). The residue at position 26 (K26) is an N6-acetyllysine; alternate. N6-methyllysine; alternate is present on K26. K34 carries the N6-(beta-hydroxybutyryl)lysine; alternate modification. Position 34 is an N6-succinyllysine; alternate (K34). S36 carries the phosphoserine modification. The H15 domain maps to S36–K109. K52 carries the N6-(beta-hydroxybutyryl)lysine modification. Residue R54 is modified to Citrulline. N6-(beta-hydroxybutyryl)lysine is present on residues K64, K85, K90, and K106. The disordered stretch occupies residues T92–K219. Residues K119–K140 are compositionally biased toward basic residues. Residue T146 is modified to Phosphothreonine. 2 stretches are compositionally biased toward basic residues: residues K149–K160 and K168–P185. S150 is subject to ADP-ribosylserine. At S187 the chain carries Phosphoserine. The span at K192 to K219 shows a compositional bias: basic residues.

This sequence belongs to the histone H1/H5 family. Post-translationally, H1 histones are progressively phosphorylated during the cell cycle, becoming maximally phosphorylated during late G2 phase and M phase, and being dephosphorylated sharply thereafter. Acetylated at Lys-26. Deacetylated at Lys-26 by SIRT1. In terms of processing, citrullination at Arg-54 (H1R54ci) by PADI4 takes place within the DNA-binding site of H1 and results in its displacement from chromatin and global chromatin decondensation, thereby promoting pluripotency and stem cell maintenance. Post-translationally, ADP-ribosylated on Ser-150 in response to DNA damage.

The protein resides in the nucleus. Its subcellular location is the chromosome. Functionally, histone H1 protein binds to linker DNA between nucleosomes forming the macromolecular structure known as the chromatin fiber. Histones H1 are necessary for the condensation of nucleosome chains into higher-order structured fibers. Also acts as a regulator of individual gene transcription through chromatin remodeling, nucleosome spacing and DNA methylation. The sequence is that of Histone H1.4 from Homo sapiens (Human).